A 529-amino-acid chain; its full sequence is Bifunctional purine biosynthesis protein PurH (529 aa).

An MGS-like domain is found at 1-148; sequence MQQRRSVRRA…KNHKDVAIVV (148 aa).

The protein belongs to the PurH family.

It catalyses the reaction (6R)-10-formyltetrahydrofolate + 5-amino-1-(5-phospho-beta-D-ribosyl)imidazole-4-carboxamide = 5-formamido-1-(5-phospho-D-ribosyl)imidazole-4-carboxamide + (6S)-5,6,7,8-tetrahydrofolate. The catalysed reaction is IMP + H2O = 5-formamido-1-(5-phospho-D-ribosyl)imidazole-4-carboxamide. It participates in purine metabolism; IMP biosynthesis via de novo pathway; 5-formamido-1-(5-phospho-D-ribosyl)imidazole-4-carboxamide from 5-amino-1-(5-phospho-D-ribosyl)imidazole-4-carboxamide (10-formyl THF route): step 1/1. The protein operates within purine metabolism; IMP biosynthesis via de novo pathway; IMP from 5-formamido-1-(5-phospho-D-ribosyl)imidazole-4-carboxamide: step 1/1. The protein is Bifunctional purine biosynthesis protein PurH of Salmonella arizonae (strain ATCC BAA-731 / CDC346-86 / RSK2980).